Reading from the N-terminus, the 212-residue chain is Protein irg-1 (212 aa).

As to expression, expressed in the intestine.

Plays a role in innate immunity by conferring resistance to virulent strains of the Gram-negative bacterium P.aeruginosa via the zip-2 pathway. Can act independently of several immunity-related pathways including pmk-1 p38MAPK, dbl-1 TGF-beta, kgb-1 JNK and bar-1/beta-catenin pathways. The sequence is that of Protein irg-1 from Caenorhabditis elegans.